Here is a 118-residue protein sequence, read N- to C-terminus: NADH-quinone oxidoreductase subunit A (118 aa).

Transmembrane regions (helical) follow at residues 5 to 25 (YAFIGIFALAAITFPLLPLVL), 62 to 82 (LYALAFVIFDIETVFLYPWAV), and 87 to 107 (LGLFALFEMVVFLAILTIGLV).

This sequence belongs to the complex I subunit 3 family. As to quaternary structure, NDH-1 is composed of 14 different subunits. Subunits NuoA, H, J, K, L, M, N constitute the membrane sector of the complex.

The protein resides in the cell membrane. The enzyme catalyses a quinone + NADH + 5 H(+)(in) = a quinol + NAD(+) + 4 H(+)(out). NDH-1 shuttles electrons from NADH, via FMN and iron-sulfur (Fe-S) centers, to quinones in the respiratory chain. The immediate electron acceptor for the enzyme in this species is believed to be ubiquinone. Couples the redox reaction to proton translocation (for every two electrons transferred, four hydrogen ions are translocated across the cytoplasmic membrane), and thus conserves the redox energy in a proton gradient. This chain is NADH-quinone oxidoreductase subunit A, found in Herpetosiphon aurantiacus (strain ATCC 23779 / DSM 785 / 114-95).